A 359-amino-acid chain; its full sequence is DNA polymerase IV (359 aa).

Residues 6-186 (IIHVDMDAFY…LPIEAFWGVG (181 aa)) enclose the UmuC domain. Residues aspartate 10 and aspartate 104 each contribute to the Mg(2+) site. The active site involves glutamate 105.

Belongs to the DNA polymerase type-Y family. Monomer. It depends on Mg(2+) as a cofactor.

It localises to the cytoplasm. The enzyme catalyses DNA(n) + a 2'-deoxyribonucleoside 5'-triphosphate = DNA(n+1) + diphosphate. Poorly processive, error-prone DNA polymerase involved in untargeted mutagenesis. Copies undamaged DNA at stalled replication forks, which arise in vivo from mismatched or misaligned primer ends. These misaligned primers can be extended by PolIV. Exhibits no 3'-5' exonuclease (proofreading) activity. May be involved in translesional synthesis, in conjunction with the beta clamp from PolIII. This chain is DNA polymerase IV, found in Akkermansia muciniphila (strain ATCC BAA-835 / DSM 22959 / JCM 33894 / BCRC 81048 / CCUG 64013 / CIP 107961 / Muc).